Here is a 53-residue protein sequence, read N- to C-terminus: Conotoxin Ac4.3b (53 aa).

A propeptide spanning residues 1–11 (SDVRNAAVHER) is cleaved from the precursor. Position 12 is a pyrrolidone carboxylic acid (glutamine 12). Glutamate 14 bears the 4-carboxyglutamate mark. Serine 18 carries an O-linked (HexNAc...) serine glycan. 4-hydroxyproline is present on residues proline 28, proline 33, and proline 48. Proline 48 is subject to Proline amide. The propeptide occupies 49–53 (GRRND).

Belongs to the conotoxin A superfamily. In terms of processing, contains 3 disulfide bonds. As to expression, expressed by the venom duct.

It is found in the secreted. Functionally, probable neurotoxin with ion channel inhibitor activity. The sequence is that of Conotoxin Ac4.3b from Conus achatinus (Little frog cone).